The chain runs to 116 residues: NADH-ubiquinone oxidoreductase chain 3 (116 aa).

3 helical membrane passes run 4–24 (FMVM…LAFW), 56–76 (FFLV…LLPS), and 87–107 (FTLL…IYEW).

The protein belongs to the complex I subunit 3 family.

It localises to the mitochondrion membrane. It carries out the reaction a ubiquinone + NADH + 5 H(+)(in) = a ubiquinol + NAD(+) + 4 H(+)(out). In terms of biological role, core subunit of the mitochondrial membrane respiratory chain NADH dehydrogenase (Complex I) that is believed to belong to the minimal assembly required for catalysis. Complex I functions in the transfer of electrons from NADH to the respiratory chain. The immediate electron acceptor for the enzyme is believed to be ubiquinone. The protein is NADH-ubiquinone oxidoreductase chain 3 (MT-ND3) of Petromyzon marinus (Sea lamprey).